Reading from the N-terminus, the 119-residue chain is Large ribosomal subunit protein bL20 (119 aa).

Belongs to the bacterial ribosomal protein bL20 family.

Binds directly to 23S ribosomal RNA and is necessary for the in vitro assembly process of the 50S ribosomal subunit. It is not involved in the protein synthesizing functions of that subunit. The polypeptide is Large ribosomal subunit protein bL20 (Thermoanaerobacter sp. (strain X514)).